Consider the following 83-residue polypeptide: Small ribosomal subunit protein eS21 (83 aa).

Belongs to the eukaryotic ribosomal protein eS21 family. Component of the 40S small ribosomal subunit.

The protein resides in the cytoplasm. The protein localises to the cytosol. It localises to the rough endoplasmic reticulum. Component of the small ribosomal subunit. The ribosome is a large ribonucleoprotein complex responsible for the synthesis of proteins in the cell. The sequence is that of Small ribosomal subunit protein eS21 (rps21) from Xenopus laevis (African clawed frog).